A 276-amino-acid polypeptide reads, in one-letter code: Alpha N-terminal protein methyltransferase 1 (276 aa).

S-adenosyl-L-methionine is bound by residues glycine 96, arginine 101, 118-120 (EPV), 149-150 (LQ), and glutamine 165.

The protein belongs to the methyltransferase superfamily. NTM1 family.

The catalysed reaction is N-terminal L-alanyl-L-prolyl-L-lysyl-[protein] + 3 S-adenosyl-L-methionine = N-terminal N,N,N-trimethyl-L-alanyl-L-prolyl-L-lysyl-[protein] + 3 S-adenosyl-L-homocysteine + 3 H(+). It carries out the reaction N-terminal L-seryl-L-prolyl-L-lysyl-[protein] + 3 S-adenosyl-L-methionine = N-terminal N,N,N-trimethyl-L-seryl-L-prolyl-L-lysyl-[protein] + 3 S-adenosyl-L-homocysteine + 3 H(+). It catalyses the reaction N-terminal L-prolyl-L-prolyl-L-lysyl-[protein] + 2 S-adenosyl-L-methionine = N-terminal N,N-dimethyl-L-prolyl-L-prolyl-L-lysyl-[protein] + 2 S-adenosyl-L-homocysteine + 2 H(+). In terms of biological role, alpha-N-methyltransferase that methylates the N-terminus of target proteins containing the N-terminal motif [Ala/Pro/Ser]-Pro-Lys when the initiator Met is cleaved. Specifically catalyzes mono-, di- or tri-methylation of exposed alpha-amino group of Ala or Ser residue in the [Ala/Ser]-Pro-Lys motif and mono- or di-methylation of Pro in the Pro-Pro-Lys motif. The chain is Alpha N-terminal protein methyltransferase 1 from Arabidopsis thaliana (Mouse-ear cress).